A 123-amino-acid polypeptide reads, in one-letter code: WAP four-disulfide core domain protein 2 (123 aa).

The signal sequence occupies residues 1–26 (MPACRLGLLVASLLLGLLLGLPPVTG). WAP domains lie at 28 to 69 (GAEK…VTIC) and 72 to 122 (PNEK…VTPV). 8 disulfides stabilise this stretch: cysteine 35–cysteine 61, cysteine 44–cysteine 65, cysteine 48–cysteine 60, cysteine 54–cysteine 69, cysteine 79–cysteine 109, cysteine 92–cysteine 113, cysteine 96–cysteine 108, and cysteine 102–cysteine 118.

In terms of assembly, homotrimer; disulfide-linked. Detected in the distal parts of the epididymis.

It localises to the secreted. In terms of biological role, broad range protease inhibitor. The polypeptide is WAP four-disulfide core domain protein 2 (WFDC2) (Sus scrofa (Pig)).